Reading from the N-terminus, the 357-residue chain is 3-isopropylmalate dehydrogenase (357 aa).

Gly77–Glu90 is a binding site for NAD(+). Residues Arg97, Arg107, Arg136, and Asp224 each contribute to the substrate site. Mg(2+) is bound by residues Asp224, Asp248, and Asp252. Residue Gly282 to Asn294 participates in NAD(+) binding.

Belongs to the isocitrate and isopropylmalate dehydrogenases family. LeuB type 1 subfamily. Homodimer. Mg(2+) serves as cofactor. The cofactor is Mn(2+).

The protein localises to the cytoplasm. It catalyses the reaction (2R,3S)-3-isopropylmalate + NAD(+) = 4-methyl-2-oxopentanoate + CO2 + NADH. It functions in the pathway amino-acid biosynthesis; L-leucine biosynthesis; L-leucine from 3-methyl-2-oxobutanoate: step 3/4. Functionally, catalyzes the oxidation of 3-carboxy-2-hydroxy-4-methylpentanoate (3-isopropylmalate) to 3-carboxy-4-methyl-2-oxopentanoate. The product decarboxylates to 4-methyl-2 oxopentanoate. In Clostridium pasteurianum, this protein is 3-isopropylmalate dehydrogenase (leuB).